An 880-amino-acid chain; its full sequence is Beta-N-acetylglucosaminidase (880 aa).

An N-terminal signal peptide occupies residues 1-27 (MKKRLIAPMLLSAASLAFFAMSGSAQA). 3 consecutive SPOR domains span residues 70–149 (SGTT…VKAY), 150–229 (GAAQ…LKET), and 230–311 (VKGQ…YQQV). 2 consecutive repeat copies span residues 439 to 473 (ITTESLLDQTKVNQALTFFKSNHISVASQKTGQTA) and 479 to 513 (ITTEAIISQEEIDRVLTFFKQNHIAVTTSKTGQTA). In terms of domain architecture, SH3b spans 630–700 (TATSTVTADV…VDPNNFSRDS (71 aa)).

This sequence belongs to the glycosyl hydrolase 73 family. Homodimer.

The protein resides in the secreted. It localises to the cell wall. The enzyme catalyses an N(4)-(oligosaccharide-(1-&gt;3)-[oligosaccharide-(1-&gt;6)]-beta-D-Man-(1-&gt;4)-beta-D-GlcNAc-(1-&gt;4)-alpha-D-GlcNAc)-L-asparaginyl-[protein] + H2O = an oligosaccharide-(1-&gt;3)-[oligosaccharide-(1-&gt;6)]-beta-D-Man-(1-&gt;4)-D-GlcNAc + N(4)-(N-acetyl-beta-D-glucosaminyl)-L-asparaginyl-[protein]. Its activity is regulated as follows. Inhibited by diethyl pyrocarbonate, slightly by EDTA. Not inhibited by PMSF, diisopropyl fluorophosphate, 2-mercaptoethanol or N-ethylmaleimide. Cell wall hydrolase not involved in cell autolysis, competence, sporulation or germination. It hydrolyzes the beta-1,4 glycan bond between the N-acetylglucosaminyl and the N-acetylmuramoyl residues in the glycan chain. The chain is Beta-N-acetylglucosaminidase (lytD) from Bacillus subtilis (strain 168).